Reading from the N-terminus, the 401-residue chain is Nicotinate phosphoribosyltransferase (401 aa).

The residue at position 221 (His-221) is a Phosphohistidine; by autocatalysis.

Belongs to the NAPRTase family. In terms of processing, transiently phosphorylated on a His residue during the reaction cycle. Phosphorylation strongly increases the affinity for substrates and increases the rate of nicotinate D-ribonucleotide production. Dephosphorylation regenerates the low-affinity form of the enzyme, leading to product release.

It carries out the reaction nicotinate + 5-phospho-alpha-D-ribose 1-diphosphate + ATP + H2O = nicotinate beta-D-ribonucleotide + ADP + phosphate + diphosphate. Its pathway is cofactor biosynthesis; NAD(+) biosynthesis; nicotinate D-ribonucleotide from nicotinate: step 1/1. In terms of biological role, catalyzes the synthesis of beta-nicotinate D-ribonucleotide from nicotinate and 5-phospho-D-ribose 1-phosphate at the expense of ATP. This Yersinia pseudotuberculosis serotype O:1b (strain IP 31758) protein is Nicotinate phosphoribosyltransferase.